Here is a 32-residue protein sequence, read N- to C-terminus: Photosystem II reaction center protein T (32 aa).

Residue M1 is modified to N-formylmethionine. The Lumenal segment spans residues 1–2 (ME). The chain crosses the membrane as a helical span at residues 3–23 (TITYVFIFACIIALFFFAIFF). Over 24–32 (REPPRITKK) the chain is Cytoplasmic.

The protein belongs to the PsbT family. PSII is composed of 1 copy each of membrane proteins PsbA, PsbB, PsbC, PsbD, PsbE, PsbF, PsbH, PsbI, PsbJ, PsbK, PsbL, PsbM, PsbT, PsbX, PsbY, PsbZ, Psb30/Ycf12, PsbO, CyanoQ (PsbQ), PsbU, PsbV and a large number of cofactors. It forms dimeric complexes. Part of a photosystem II (PSII) assembly intermediate complex PSII-I; crystallized from a strain deleted of psbJ, it forms monomeric PSII before addition of the oxygen evolving complex. PSII-I includes 3 assembly factors not found in mature PSII (Psb27, Psb28 and Psb34). PSII binds multiple chlorophylls, carotenoids and specific lipids. serves as cofactor.

The protein localises to the cellular thylakoid membrane. Its function is as follows. Found at the monomer-monomer interface of the photosystem II (PS II) dimer, plays a role in assembly and dimerization of PSII. PSII is a light-driven water plastoquinone oxidoreductase, using light energy to abstract electrons from H(2)O, generating a proton gradient subsequently used for ATP formation. This Thermosynechococcus vestitus (strain NIES-2133 / IAM M-273 / BP-1) protein is Photosystem II reaction center protein T.